The chain runs to 418 residues: Peptide chain release factor subunit 1 (418 aa).

It belongs to the eukaryotic release factor 1 family. In terms of assembly, heterodimer of two subunits, one of which binds GTP.

It localises to the cytoplasm. In terms of biological role, directs the termination of nascent peptide synthesis (translation) in response to the termination codons UAA, UAG and UGA. The chain is Peptide chain release factor subunit 1 from Haloarcula marismortui (strain ATCC 43049 / DSM 3752 / JCM 8966 / VKM B-1809) (Halobacterium marismortui).